Here is an 87-residue protein sequence, read N- to C-terminus: Phosphoribosyl-ATP pyrophosphatase (87 aa).

This sequence belongs to the PRA-PH family.

Its subcellular location is the cytoplasm. It catalyses the reaction 1-(5-phospho-beta-D-ribosyl)-ATP + H2O = 1-(5-phospho-beta-D-ribosyl)-5'-AMP + diphosphate + H(+). Its pathway is amino-acid biosynthesis; L-histidine biosynthesis; L-histidine from 5-phospho-alpha-D-ribose 1-diphosphate: step 2/9. This Nocardia farcinica (strain IFM 10152) protein is Phosphoribosyl-ATP pyrophosphatase.